The following is a 308-amino-acid chain: 4-hydroxy-3-methylbut-2-enyl diphosphate reductase (308 aa).

C13 lines the [4Fe-4S] cluster pocket. H42 and H75 together coordinate (2E)-4-hydroxy-3-methylbut-2-enyl diphosphate. Residues H42 and H75 each coordinate dimethylallyl diphosphate. Residues H42 and H75 each contribute to the isopentenyl diphosphate site. A [4Fe-4S] cluster-binding site is contributed by C97. Residue H125 participates in (2E)-4-hydroxy-3-methylbut-2-enyl diphosphate binding. Position 125 (H125) interacts with dimethylallyl diphosphate. H125 is a binding site for isopentenyl diphosphate. The Proton donor role is filled by E127. T165 provides a ligand contact to (2E)-4-hydroxy-3-methylbut-2-enyl diphosphate. C195 contributes to the [4Fe-4S] cluster binding site. (2E)-4-hydroxy-3-methylbut-2-enyl diphosphate-binding residues include S223, S224, N225, and S267. Residues S223, S224, N225, and S267 each contribute to the dimethylallyl diphosphate site. Residues S223, S224, N225, and S267 each coordinate isopentenyl diphosphate.

Belongs to the IspH family. The cofactor is [4Fe-4S] cluster.

It carries out the reaction isopentenyl diphosphate + 2 oxidized [2Fe-2S]-[ferredoxin] + H2O = (2E)-4-hydroxy-3-methylbut-2-enyl diphosphate + 2 reduced [2Fe-2S]-[ferredoxin] + 2 H(+). The catalysed reaction is dimethylallyl diphosphate + 2 oxidized [2Fe-2S]-[ferredoxin] + H2O = (2E)-4-hydroxy-3-methylbut-2-enyl diphosphate + 2 reduced [2Fe-2S]-[ferredoxin] + 2 H(+). The protein operates within isoprenoid biosynthesis; dimethylallyl diphosphate biosynthesis; dimethylallyl diphosphate from (2E)-4-hydroxy-3-methylbutenyl diphosphate: step 1/1. It functions in the pathway isoprenoid biosynthesis; isopentenyl diphosphate biosynthesis via DXP pathway; isopentenyl diphosphate from 1-deoxy-D-xylulose 5-phosphate: step 6/6. Catalyzes the conversion of 1-hydroxy-2-methyl-2-(E)-butenyl 4-diphosphate (HMBPP) into a mixture of isopentenyl diphosphate (IPP) and dimethylallyl diphosphate (DMAPP). Acts in the terminal step of the DOXP/MEP pathway for isoprenoid precursor biosynthesis. The sequence is that of 4-hydroxy-3-methylbut-2-enyl diphosphate reductase from Chlamydia muridarum (strain MoPn / Nigg).